Reading from the N-terminus, the 980-residue chain is MTEFGWRRFNFFDRSVVFDKDDPKQKFMGLKDVAVDCWCSSGGSVYLGEAKGGVFQLTNQFSEYYWKAYQKSLASLHSADKYLFSIGEDDETVNTLLKIWDPERVEKNTPHVMRTIRMSPLNPTSSSPACSIAVHSSLQSVVVGYTDGTVLFYQGDVLHDKSLNSRWIKVRDSSVGEGSVTGLAIAVLPASKTVVFVITQKHVHSYVLENGRTVIAHKKHDANGATADCWTFDESTGQLIVASREMLFFYDADQCIDMDGGEVGRCLQLGRGHEKLQLVASGQYLALLTKHHSLIQKERDSEFMTMLSVYDIKGQYVGFSCSLPNLCRLFIAGSTMLVLSHDGLLSELIEKNLATKLDILVKKSMFDVAVLIAKNSRDGGDYLKGIHAKYGNYLYGKGDYENAIQQYKETIGMLEPSYVMKRYLDSSKIKELCIYLECLHDAKRDNEHQTKILMNAYAKQGEKKKLMEFVNKITDGTRVSRMRDVFEILLKWNYLAEASLLATKFQMHEDALNVIIHHMHKYTMGVTYISKMPIESVIEMTGKFGRDLLIHARDDLMHMLWEKIQENTDAKKNNFMRIFDIFMGDMDASRVFLSYIENQTNEHDEFIIPILECQMRLFKVNSDWSQERLEEDIYRFINKKNEDAALQMAQLFDCTPVIEHILMRCHKSKELMMYHQKKRDLEAIIRLCQSCSKEEKRRLWLDALSFIGKHATARDELIIIDLLKEIEASEQIHPLVVLELLAKNEHLTISSVRDYIIAWLRKQQIIIEEDRNTIKENNKAMGELDGTVESLKFNAQIMQVTKCSACDTPLQLPTVHFLCKHAYHVHCFESYNMDGSDKCPACQTTRDTTRDEEISYHKFQKELAEASNGMELIAMYLQRGLFDEKTKKTKKSEAKKDPFSTGRASTTTNPFDDDEVTTISRTMSTVSSNMATPSRQRSITRKDDDSTNPFFNSDSGTRLSTYDESKNPFGAPAPSTNPFD.

One copy of the CHCR repeat lies at 407-554; sequence YKETIGMLEP…GRDLLIHARD (148 aa). Residues 803-843 form an RING-type; atypical zinc finger; it reads CSACDTPLQLPTVHFLCKHAYHVHCFESYNMDGSDKCPACQ. Positions 886–898 are enriched in basic and acidic residues; the sequence is TKKTKKSEAKKDP. The interval 886–980 is disordered; it reads TKKTKKSEAK…APAPSTNPFD (95 aa). Composition is skewed to polar residues over residues 917 to 937 and 947 to 960; these read TTIS…SRQR and TNPF…TRLS.

Belongs to the VPS11 family. As to quaternary structure, probable core component of at least two putative endosomal tethering complexes, the homotypic fusion and vacuole protein sorting (HOPS) complex and the class C core vacuole/endosome tethering (CORVET) complex. Their common core is composed of the class C Vps proteins vps-11, vps-16 and vps-18, which in HOPS further associates with vps-33.1, vps-39 and vps-41 and in CORVET with vps-8 and vps-33.2.

The protein resides in the late endosome membrane. Its subcellular location is the lysosome membrane. Functionally, plays a role in vesicle-mediated protein trafficking to lysosomal compartments including the endocytic membrane transport pathways. Believed to act as a core component of the putative HOPS and CORVET endosomal tethering complexes which are proposed to be involved in the rab-5-to-rab-7 endosome conversion probably implicating sand-1, and via binding SNAREs and SNARE complexes to mediate tethering and docking events during SNARE-mediated membrane fusion. The HOPS complex is proposed to be recruited to Rab7 on the late endosomal membrane and to regulate late endocytic, phagocytic and autophagic traffic towards lysosomes. Within the HOPS complex, contributes to the normal development of gut granules in embryonic and adult intestinal cells. The CORVET complex is proposed to function as a Rab5 effector to mediate early endosome fusion probably in specific endosome subpopulations. Required for fusion of endosomes and autophagosomes with lysosomes. Involved in cargo transport from early to late endosomes and required for the transition from early to late endosomes. Possibly has a role in clearance of apoptotic cells during programmed cell death. The chain is Vacuolar protein sorting-associated protein 11 homolog from Caenorhabditis elegans.